The chain runs to 131 residues: Profilin-1 (131 aa).

The protein belongs to the profilin family. As to quaternary structure, occurs in many kinds of cells as a complex with monomeric actin in a 1:1 ratio. In terms of tissue distribution, expressed at low levels roots, leaves, stems, flowers and siliques. Expressed in leaf epidermal cells, trichomes and stem epidermal cells. Detected in phloem exudates (at protein level).

It localises to the cytoplasm. Its subcellular location is the cytoskeleton. Functionally, binds to actin monomers and regulates the organization of the actin cytoskeleton. At high concentrations, profilin prevents the polymerization of actin, whereas it enhances it at low concentrations. At low concentrations, associates with the poly-proline motif of formins to enhance actin filament elongation rate. Binds ACT1, ACT7 and ACT11 and inhibits actin polymerization. Coordinates the stochastic dynamic properties of actin filaments by modulating formin-mediated actin nucleation and assembly during axial cell expansion. Binds G-actin and poly-L-proline in vitro. Inhibits cell growth of various pathogenic fungal strains. May play a role as antifungal proteins in the defense system against fungal pathogen attacks. This Arabidopsis thaliana (Mouse-ear cress) protein is Profilin-1.